The sequence spans 144 residues: Leghemoglobin-1 (144 aa).

Positions 2 to 144 (GFTEKQEALV…DGLATAIKAA (143 aa)) constitute a Globin domain. 2 positions are modified to nitrated tyrosine: tyrosine 25 and tyrosine 30. Serine 45 is a binding site for heme b. Serine 45 is modified (phosphoserine). Histidine 62 contributes to the O2 binding site. 3 residues coordinate heme b: lysine 65, histidine 93, and lysine 96. Residue tyrosine 134 is modified to Nitrated tyrosine.

The protein belongs to the plant globin family. As to quaternary structure, monomer. Nitrated in effective nodules and particularly in hypoxic conditions; this mechanism may play a protective role in the symbiosis by buffering toxic peroxynitrite NO(2)(-). Nitration level decrease during nodule senescence. In terms of processing, phosphorylation at Ser-45 disrupts the molecular environment of its porphyrin ring oxygen binding pocket, thus leading to a reduced oxygen consumption and to the delivery of oxygen O(2) to symbiosomes. In terms of tissue distribution, root nodules.

It is found in the cytoplasm. The protein localises to the cytosol. The protein resides in the nucleus. In terms of biological role, leghemoglobin that reversibly binds oxygen O(2) through a pentacoordinated heme iron. In root nodules, facilitates the diffusion of oxygen to the bacteroids while preventing the bacterial nitrogenase from being inactivated by buffering dioxygen, nitric oxide and carbon monoxide, and promoting the formation of reactive oxygen species (ROS, e.g. H(2)O(2)). This role is essential for symbiotic nitrogen fixation (SNF). The chain is Leghemoglobin-1 from Vicia faba (Broad bean).